We begin with the raw amino-acid sequence, 486 residues long: Receptor-interacting serine/threonine-protein kinase 3 (486 aa).

Position 2 is a phosphoserine (Ser2). Residues 22–292 (LKKLEFVGKG…DCEPKTNEVY (271 aa)) enclose the Protein kinase domain. ATP contacts are provided by residues 28 to 36 (VGKGGFGVV) and Lys51. The active-site Proton acceptor is the Asp143. Ser165 carries the post-translational modification Phosphoserine. Thr187 carries the post-translational modification Phosphothreonine. Ser204 is subject to Phosphoserine; by autocatalysis. Phosphothreonine; by autocatalysis is present on Thr231. Residue Ser232 is modified to Phosphoserine; by autocatalysis. Thr257 bears the Phosphothreonine mark. Phosphoserine is present on residues Ser304 and Ser326. Positions 312-333 (QHRSSGRNLSAREPSQRGTEMD) are disordered. Thr338 bears the Phosphothreonine mark. Residues 349–388 (LEEPSGPVPGKCPERQAQDTSVGPATPARTSSDPVAGTPQ) form a disordered region. Ser353, Ser369, and Ser380 each carry phosphoserine. Polar residues predominate over residues 366 to 381 (QDTSVGPATPARTSSD). A Phosphothreonine modification is found at Thr392. The RIP homotypic interaction motif (RHIM) signature appears at 440–461 (LVFNNCSEVQIGNYNSLVAPPR). Residues 462-486 (TTASSSAKYDQAQFGRGRGWQPFHK) form a disordered region. Position 477 is an omega-N-methylarginine (Arg477).

It belongs to the protein kinase superfamily. TKL Ser/Thr protein kinase family. As to quaternary structure, interacts (via RIP homotypic interaction motif) with RIPK1 (via RIP homotypic interaction motif); this interaction induces RIPK1 phosphorylation and formation of a RIPK1-RIPK3 necrosis-inducing complex. Interacts with MLKL; the interaction is direct and triggers necroptosis. Interacts with ZBP1 (via RIP homotypic interaction motif); interaction with ZBP1 activates RIPK3, triggering necroptosis. Upon TNF-induced necrosis, the RIPK1-RIPK3 dimer further interacts with PGAM5 and MLKL; the formation of this complex leads to PGAM5 phosphorylation and increase in PGAM5 phosphatase activity. Binds TRAF2 and is recruited to the TNFR-1 signaling complex. Interacts with PYGL, GLUL and GLUD1; these interactions result in activation of these metabolic enzymes. Interacts with BIRC2/c-IAP1, BIRC3/c-IAP2 and XIAP/BIRC4. Interacts with ARHGEF2. Interacts with PELI1 (via atypical FHA domain); the phosphorylated form at Thr-187 binds preferentially to PELI1. Interacts with BUB1B, TRAF2 and STUB1. Interacts with CASP6. Component of the AIM2 PANoptosome complex, a multiprotein complex that drives inflammatory cell death (PANoptosis). (Microbial infection) Interacts (via RIP homotypic interaction motif) with murid herpesvirus protein RIR1; this interaction disrupts RIP3-RIP1 interactions characteristic of TNF-alpha induced necroptosis, thereby suppressing this death pathway. In terms of processing, RIPK1 and RIPK3 undergo reciprocal auto- and trans-phosphorylation. Autophosphorylated following interaction with ZBP1. Phosphorylation of Ser-204 plays a role in the necroptotic function of RIPK3. Autophosphorylates at Thr-231 and Ser-232 following activation by ZBP1: phosphorylation at these sites is a hallmark of necroptosis and is required for binding MLKL. Phosphorylation at Thr-187 is important for its kinase activity, interaction with PELI1 and for its ability to mediate TNF-induced necroptosis. Polyubiquitinated with 'Lys-48' and 'Lys-63'-linked chains by BIRC2/c-IAP1 and BIRC3/c-IAP2, leading to activation of NF-kappa-B. Ubiquitinated by STUB1 leading to its subsequent proteasome-dependent degradation. Expressed in embryo and in adult spleen, liver, testis, heart, brain and lung.

The protein localises to the cytoplasm. The protein resides in the cytosol. It localises to the nucleus. The enzyme catalyses L-seryl-[protein] + ATP = O-phospho-L-seryl-[protein] + ADP + H(+). It carries out the reaction L-threonyl-[protein] + ATP = O-phospho-L-threonyl-[protein] + ADP + H(+). Its activity is regulated as follows. Activity is stimulated by ZBP1, which senses double-stranded Z-RNA structures. RIPK3-dependent necroptosis is inhibited by RIPK1: RIPK1 prevents the ZBP1-induced activation of RIPK3 via FADD-mediated recruitment of CASP8, which cleaves RIPK1 and limits TNF-induced necroptosis. Inhibited by type II inhibitor 1-(4-fluorophenyl)-N-[3-fluoro-4-(1H-pyrrolo[2,3-b]pyridin-4-yloxy)phenyl]-2-oxo-1,2-dihydropyridine-3-carboxamide. Functionally, serine/threonine-protein kinase that activates necroptosis and apoptosis, two parallel forms of cell death. Necroptosis, a programmed cell death process in response to death-inducing TNF-alpha family members, is triggered by RIPK3 following activation by ZBP1. Activated RIPK3 forms a necrosis-inducing complex and mediates phosphorylation of MLKL, promoting MLKL localization to the plasma membrane and execution of programmed necrosis characterized by calcium influx and plasma membrane damage. In addition to TNF-induced necroptosis, necroptosis can also take place in the nucleus in response to orthomyxoviruses infection: following ZBP1 activation, which senses double-stranded Z-RNA structures, nuclear RIPK3 catalyzes phosphorylation and activation of MLKL, promoting disruption of the nuclear envelope and leakage of cellular DNA into the cytosol. Also regulates apoptosis: apoptosis depends on RIPK1, FADD and CASP8, and is independent of MLKL and RIPK3 kinase activity. Phosphorylates RIPK1: RIPK1 and RIPK3 undergo reciprocal auto- and trans-phosphorylation. In some cell types, also able to restrict viral replication by promoting cell death-independent responses. In response to flavivirus infection in neurons, promotes a cell death-independent pathway that restricts viral replication: together with ZBP1, promotes a death-independent transcriptional program that modifies the cellular metabolism via up-regulation expression of the enzyme ACOD1/IRG1 and production of the metabolite itaconate. Itaconate inhibits the activity of succinate dehydrogenase, generating a metabolic state in neurons that suppresses replication of viral genomes. RIPK3 binds to and enhances the activity of three metabolic enzymes: GLUL, GLUD1, and PYGL. These metabolic enzymes may eventually stimulate the tricarboxylic acid cycle and oxidative phosphorylation, which could result in enhanced ROS production. The polypeptide is Receptor-interacting serine/threonine-protein kinase 3 (Mus musculus (Mouse)).